Consider the following 609-residue polypeptide: Cationic amino acid transporter 3, mitochondrial (609 aa).

A mitochondrion-targeting transit peptide spans 1-14 (MGCLRSLVRRKQFD). The next 14 membrane-spanning stretches (helical) occupy residues 38 to 58 (LIAI…VGTV), 66 to 86 (ALAL…FCYA), 104 to 124 (ICIG…EYTI), 161 to 181 (IVVD…CCLG), 190 to 210 (GIVT…GSYL), 226 to 246 (FPYG…AYIG), 270 to 290 (ISLL…VGLV), 314 to 334 (AYLI…GSIL), 361 to 381 (QVPI…AFFM), 388 to 408 (GMVS…LLIV), 474 to 494 (IMFT…FLLP), 499 to 519 (YSLC…LICI), 534 to 554 (FICP…MYLL), and 558 to 578 (GAAT…VYIF).

Belongs to the amino acid-polyamine-organocation (APC) superfamily. Cationic amino acid transporter (CAT) (TC 2.A.3.3) family. As to expression, expressed in roots, stems, flowers, and leaves.

It localises to the mitochondrion membrane. Its function is as follows. Permease involved in the transport of the cationic neutral or acidic amino acids. The polypeptide is Cationic amino acid transporter 3, mitochondrial (CAT3) (Arabidopsis thaliana (Mouse-ear cress)).